A 445-amino-acid chain; its full sequence is Inward rectifier potassium channel 4 (445 aa).

Residues Met1–Trp55 lie on the Cytoplasmic side of the membrane. A helical membrane pass occupies residues Arg56 to Ile80. Residues Ala81 to Gly120 lie on the Extracellular side of the membrane. The interval Pro91–Pro111 is val/Gly/Ala/Pro stretch. The segment at residues Phe121–Gln132 is an intramembrane region (helical; Pore-forming). The pore-forming intramembrane region spans Thr133–Phe139. The Selectivity filter signature appears at Thr134 to Phe139. The Extracellular segment spans residues Arg140–Leu148. The helical transmembrane segment at Ala149–Thr170 threads the bilayer. Residues Ile171–Ile445 lie on the Cytoplasmic side of the membrane. Positions Ser443–Ile445 match the PDZ-binding motif.

It belongs to the inward rectifier-type potassium channel (TC 1.A.2.1) family. KCNJ4 subfamily. Homomultimeric and heteromultimeric association with KCNJ2 and KCNJ12. Interacts with DLG2 and DLG4. Associates, via its PDZ-recognition domain, with a complex containing LIN7A, LIN7B, LIN7C, DLG1, CASK and APBA1. Interacts with TAX1BP3. TAX1BP3 competes with LIN7 family members for KCNJ4 binding. Heart, skeletal muscle, and several different brain regions including the hippocampus.

The protein localises to the cell membrane. It localises to the postsynaptic cell membrane. The protein resides in the cytoplasmic vesicle membrane. The enzyme catalyses K(+)(in) = K(+)(out). Functionally, inward rectifier potassium channels are characterized by a greater tendency to allow potassium to flow into the cell rather than out of it. Their voltage dependence is regulated by the concentration of extracellular potassium; as external potassium is raised, the voltage range of the channel opening shifts to more positive voltages. The inward rectification is mainly due to the blockage of outward current by internal magnesium. Can be blocked by extracellular barium and cesium. In Homo sapiens (Human), this protein is Inward rectifier potassium channel 4 (KCNJ4).